Here is a 564-residue protein sequence, read N- to C-terminus: Excitatory amino acid transporter 4 (564 aa).

Residues 1–55 lie on the Cytoplasmic side of the membrane; it reads MSSHGNSLFLRESGQRLGRVGWLQRLQESLQQRALRTRLRLQTMTREHVLRFLRR. Ser-2 is modified (phosphoserine). Transmembrane regions (helical) follow at residues 56 to 76, 99 to 119, and 133 to 153; these read NAFI…AFAL, MLQM…MASL, and VYYM…VTII. Residues Asn-216, Asn-232, and Asn-239 are each glycosylated (N-linked (GlcNAc...) asparagine). Helical transmembrane passes span 262 to 285, 295 to 322, and 344 to 365; these read SANG…IGGV, FFDS…LFLI, and LTVI…YFLI. Residues 371 to 401 constitute an intramembrane region (discontinuously helical); that stretch reads FPFIGGVLQALITAMGTSSSSATLPITFRCL. L-aspartate is bound at residue 388-390; that stretch reads SSS. A helical membrane pass occupies residues 411–437; sequence ITRFVLPVGATVNMDGTALYEALAAIF. Residues Gly-419, Thr-421, and Asn-423 each contribute to the Na(+) site. L-aspartate-binding positions include Thr-427, 468-472, Asp-501, and Asn-508; that span reads IPQAG. Residues 451-484 constitute an intramembrane region (discontinuously helical); sequence ITTISITATAASVGAAGIPQAGLVTMVIVLTSVG. The chain crosses the membrane as a helical span at residues 498–519; it reads WFLDRLRTMTNVLGDSIGAAVI. Positions 508 and 512 each coordinate Na(+).

This sequence belongs to the dicarboxylate/amino acid:cation symporter (DAACS) (TC 2.A.23) family. SLC1A6 subfamily. Homotrimer. As to expression, detected in brain, cerebellum and hippocampus.

It is found in the cell membrane. It carries out the reaction K(+)(in) + L-glutamate(out) + 3 Na(+)(out) + H(+)(out) = K(+)(out) + L-glutamate(in) + 3 Na(+)(in) + H(+)(in). It catalyses the reaction K(+)(in) + L-aspartate(out) + 3 Na(+)(out) + H(+)(out) = K(+)(out) + L-aspartate(in) + 3 Na(+)(in) + H(+)(in). The catalysed reaction is D-aspartate(out) + K(+)(in) + 3 Na(+)(out) + H(+)(out) = D-aspartate(in) + K(+)(out) + 3 Na(+)(in) + H(+)(in). In terms of biological role, sodium-dependent, high-affinity amino acid transporter that mediates the uptake of L-glutamate and also L-aspartate and D-aspartate. Functions as a symporter that transports one amino acid molecule together with two or three Na(+) ions and one proton, in parallel with the counter-transport of one K(+) ion. Mediates Cl(-) flux that is not coupled to amino acid transport; this avoids the accumulation of negative charges due to aspartate and Na(+) symport. Plays a redundant role in the rapid removal of released glutamate from the synaptic cleft, which is essential for terminating the postsynaptic action of glutamate. In Canis lupus familiaris (Dog), this protein is Excitatory amino acid transporter 4 (SLC1A6).